The following is a 352-amino-acid chain: UDP-N-acetylglucosamine--N-acetylmuramyl-(pentapeptide) pyrophosphoryl-undecaprenol N-acetylglucosamine transferase (352 aa).

Residues 11–13 (TGG), asparagine 120, arginine 161, serine 188, and glutamine 286 each bind UDP-N-acetyl-alpha-D-glucosamine.

It belongs to the glycosyltransferase 28 family. MurG subfamily.

The protein localises to the cell inner membrane. It catalyses the reaction di-trans,octa-cis-undecaprenyl diphospho-N-acetyl-alpha-D-muramoyl-L-alanyl-D-glutamyl-meso-2,6-diaminopimeloyl-D-alanyl-D-alanine + UDP-N-acetyl-alpha-D-glucosamine = di-trans,octa-cis-undecaprenyl diphospho-[N-acetyl-alpha-D-glucosaminyl-(1-&gt;4)]-N-acetyl-alpha-D-muramoyl-L-alanyl-D-glutamyl-meso-2,6-diaminopimeloyl-D-alanyl-D-alanine + UDP + H(+). The protein operates within cell wall biogenesis; peptidoglycan biosynthesis. Its function is as follows. Cell wall formation. Catalyzes the transfer of a GlcNAc subunit on undecaprenyl-pyrophosphoryl-MurNAc-pentapeptide (lipid intermediate I) to form undecaprenyl-pyrophosphoryl-MurNAc-(pentapeptide)GlcNAc (lipid intermediate II). The sequence is that of UDP-N-acetylglucosamine--N-acetylmuramyl-(pentapeptide) pyrophosphoryl-undecaprenol N-acetylglucosamine transferase from Prochlorococcus marinus (strain NATL2A).